The primary structure comprises 547 residues: Chaperonin GroEL (547 aa).

ATP-binding positions include 30–33 (TLGP), K51, 87–91 (DGTTT), G415, and D495. Residues 526–547 (KKESAGGGGMPGGMGGMGGMDF) form a disordered region. The segment covering 530–547 (AGGGGMPGGMGGMGGMDF) has biased composition (gly residues).

The protein belongs to the chaperonin (HSP60) family. In terms of assembly, forms a cylinder of 14 subunits composed of two heptameric rings stacked back-to-back. Interacts with the co-chaperonin GroES.

The protein resides in the cytoplasm. It carries out the reaction ATP + H2O + a folded polypeptide = ADP + phosphate + an unfolded polypeptide.. Functionally, together with its co-chaperonin GroES, plays an essential role in assisting protein folding. The GroEL-GroES system forms a nano-cage that allows encapsulation of the non-native substrate proteins and provides a physical environment optimized to promote and accelerate protein folding. The polypeptide is Chaperonin GroEL (Hyphomonas neptunium (strain ATCC 15444)).